The following is a 309-amino-acid chain: Tagatose-6-phosphate kinase (309 aa).

The protein belongs to the carbohydrate kinase PfkB family. LacC subfamily.

The enzyme catalyses D-tagatofuranose 6-phosphate + ATP = D-tagatofuranose 1,6-bisphosphate + ADP + H(+). It participates in carbohydrate metabolism; D-tagatose 6-phosphate degradation; D-glyceraldehyde 3-phosphate and glycerone phosphate from D-tagatose 6-phosphate: step 1/2. The sequence is that of Tagatose-6-phosphate kinase from Streptococcus pyogenes serotype M18 (strain MGAS8232).